The following is a 239-amino-acid chain: Lactate utilization protein A (239 aa).

This sequence belongs to the LutA/YkgE family.

In terms of biological role, is involved in L-lactate degradation and allows cells to grow with lactate as the sole carbon source. In Bacillus cereus (strain B4264), this protein is Lactate utilization protein A.